Here is a 337-residue protein sequence, read N- to C-terminus: tRNA N6-adenosine threonylcarbamoyltransferase (337 aa).

Positions 111 and 115 each coordinate Fe cation. Substrate contacts are provided by residues 134-138 (LVSGG), Asp-167, Gly-180, and Asn-272. Fe cation is bound at residue Asp-300.

The protein belongs to the KAE1 / TsaD family. Fe(2+) serves as cofactor.

It localises to the cytoplasm. The enzyme catalyses L-threonylcarbamoyladenylate + adenosine(37) in tRNA = N(6)-L-threonylcarbamoyladenosine(37) in tRNA + AMP + H(+). Functionally, required for the formation of a threonylcarbamoyl group on adenosine at position 37 (t(6)A37) in tRNAs that read codons beginning with adenine. Is involved in the transfer of the threonylcarbamoyl moiety of threonylcarbamoyl-AMP (TC-AMP) to the N6 group of A37, together with TsaE and TsaB. TsaD likely plays a direct catalytic role in this reaction. The sequence is that of tRNA N6-adenosine threonylcarbamoyltransferase from Yersinia pseudotuberculosis serotype I (strain IP32953).